We begin with the raw amino-acid sequence, 1165 residues long: MTEEDRKLTVETETVEAPVANNLLLSNNSNVVAPNPSIPSASTSTSPLHREIVDDSVATANTTSNVVQHNLPTIDNNLMDSDATSHNQDHWHSDINRAGTSMSTSDIPTDLHLEHIGSVSSTNNNSNNALINHNPLSSHLSNPSSSLRNKKSSLLVASNPAFASDVELSKKKPAVISNNMPTSNIALYQTARSANIHGPSSTSASKAFRKASAFSNNTAPSTSNNIGSNTPPAPLLPLPSLSQQNKPKIIERPTMHVTNSREILLGENLLDDTKAKNAPANSTTHDNGPVANDGLRIPNHSNADDNENNNKMKKNKNINSGKNERNDDTSKICTTSTKTAPSTAPLGSTDNTQALTASVSSSNADNHNNNKKKTSSNNNGNNSNSASNKTNADIKNSNADLSASTSNNNAINDDSHESNSEKPTKADFFAARLATAVGENEISDSEETFVYESAANSTKNLIFPDSSSQQQQQQQQPPKQQQQQQNHGITSKISAPLLNNNKKLLSRLKNSRHISTGAILNNTIATISTNPNLNSNVMQNNNNLMSGHNHLDELSSIKQEPPHQLQQQQPPMDVQSVDSYTSDNPDSNVIAKSPDKRSSLVSLSKVSPHLLSSTSSNGNTISCPNVATNSQELEPNNDISTKKSLSNSTLRHSSANRNSNYGDNKRPLRTTVSKIFDSNPNGAPLRRYSGVPDHVNLEDYIEQPHNYPTMQNSVKKDEFYNSRNNKFPHGLNFYGDNNVIEEENNGDSSNVNRPQHTNLQHEFIPEDNESDENDIHSMFYYNHKNDLETKPLISDYGEDEDVDDYDRPNATFNSYYGSASNTHELPLHGRMPSRSNNDYYDFMVGNNTGNNNQLNEYTPLRMKRGQRHLSRTNNSIMNGSIHMNGNDDVTHSNINNNDIVGYSPHNFYSRKSPFVKVKNFLYLAFVISSLLMTGFILGFLLATNKELQDVDVVVMDNVISSSDELIFDITVSAFNPGFFSISVSQVDLDIFAKSSYLKCDSNGDCTVMEQERKILQITTNLSLVEESANNDISGGNIETVLLGTAKKLETPLKFQGGAFNRNYDVSVSSVKLLSPGSREAKHENDDDDDDDGDDGDDENNTNERQYKSKPNARDDKEDDTKKWKLLIKHDYELIVRGSMKYEVPFFNTQKSTAIQKDSMVHPGKK.

Over 1–919 (MTEEDRKLTV…RKSPFVKVKN (919 aa)) the chain is Cytoplasmic. Positions 118-147 (SVSSTNNNSNNALINHNPLSSHLSNPSSSL) are disordered. Residue Ser-164 is modified to Phosphoserine. 4 disordered regions span residues 215–241 (SNNT…LPSL), 274–423 (KAKN…SEKP), 461–497 (LIFP…SAPL), and 560–668 (EPPH…KRPL). Over residues 216 to 230 (NNTAPSTSNNIGSNT) the composition is skewed to polar residues. Positions 334–345 (TTSTKTAPSTAP) are enriched in low complexity. The span at 346-367 (LGSTDNTQALTASVSSSNADNH) shows a compositional bias: polar residues. The segment covering 375–391 (SSNNNGNNSNSASNKTN) has biased composition (low complexity). A compositionally biased stretch (polar residues) spans 393–412 (DIKNSNADLSASTSNNNAIN). Basic and acidic residues predominate over residues 413–423 (DDSHESNSEKP). 2 stretches are compositionally biased toward low complexity: residues 469–485 (QQQQ…QQQQ) and 562–571 (PHQLQQQQPP). The span at 576-587 (SVDSYTSDNPDS) shows a compositional bias: polar residues. The span at 599-613 (SLVSLSKVSPHLLSS) shows a compositional bias: low complexity. Residues 614-662 (TSSNGNTISCPNVATNSQELEPNNDISTKKSLSNSTLRHSSANRNSNYG) are compositionally biased toward polar residues. Residues 920–940 (FLYLAFVISSLLMTGFILGFL) form a helical; Signal-anchor for type II membrane protein membrane-spanning segment. Topologically, residues 941–1165 (LATNKELQDV…KDSMVHPGKK (225 aa)) are vacuolar. Asn-1020 and Asn-1099 each carry an N-linked (GlcNAc...) asparagine glycan. Residues 1074 to 1121 (SPGSREAKHENDDDDDDDGDDGDDENNTNERQYKSKPNARDDKEDDTK) form a disordered region. Acidic residues predominate over residues 1085–1100 (DDDDDDDGDDGDDENN). Basic and acidic residues predominate over residues 1111-1121 (NARDDKEDDTK).

Component of the PI(3,5)P2 regulatory complex, composed of ATG18, FIG4, FAB1, VAC14 and VAC7. VAC14 nucleates the assembly of the complex and serves as a scaffold. Post-translationally, N-glycosylated.

The protein localises to the vacuole membrane. The PI(3,5)P2 regulatory complex regulates both the synthesis and turnover of phosphatidylinositol 3,5-bisphosphate (PtdIns(3,5)P2). Positively regulates FAB1 kinase activity. Major activator of FAB1 during hyperosmotic shock and can elevate levels of PtdIns(3,5)P2 in the absence of VAC14 and FIG4. Directly involved in vacuolar membrane scission. Required for normal vacuole acidification, inheritance and morphology. This Saccharomyces cerevisiae (strain ATCC 204508 / S288c) (Baker's yeast) protein is Vacuolar segregation protein 7 (VAC7).